The chain runs to 662 residues: Methyl-accepting chemotaxis protein TlpA (662 aa).

Residues 1-16 (MKKTLTTIRRSSIARR) lie on the Cytoplasmic side of the membrane. A helical transmembrane segment spans residues 17-37 (LIISFLLILIVPITALSVSAY). Topologically, residues 38 to 281 (QSAVASLDVQ…IHDAASRVLI (244 aa)) are extracellular. The Cache domain maps to 152–228 (VTEPYESISS…KAGTELKGDW (77 aa)). A helical membrane pass occupies residues 282–302 (MASIVLAIAIGAGMTAIYFVI). The HAMP domain maps to 303 to 355 (RSITKPLRRIVASAEKISEGDLTETIEINSKDELGVLSESFNHMAHSLRSLIH). The Cytoplasmic segment spans residues 303-662 (RSITKPLRRI…DLTKQFKVDK (360 aa)). Glutamate methyl ester (Glu) is present on residues Glu370, Glu594, Glu629, and Glu636. The Methyl-accepting transducer domain occupies 374-610 (SADQTSRATE…EISAASNDIT (237 aa)).

The protein belongs to the methyl-accepting chemotaxis (MCP) protein family. In terms of assembly, interacts with YabA.

The protein localises to the cell membrane. Functionally, chemotactic-signal transducers respond to changes in the concentration of attractants and repellents in the environment, transduce a signal from the outside to the inside of the cell, and facilitate sensory adaptation through the variation of the level of methylation. All amino acids serve as attractants in B.subtilis, they appear to cause an increase in the turnover methyl groups, leading to methylation of an unidentified acceptor, while repellents have been shown to cause a decrease in methyl group turnover. The methyl groups are added by a methyltransferase and removed by a methylesterase. This is Methyl-accepting chemotaxis protein TlpA from Bacillus subtilis (strain 168).